A 510-amino-acid chain; its full sequence is Tryptophan 6-hydroxylase fscE (510 aa).

A helical membrane pass occupies residues 11-31 (LLPIEGVIILVFVLSCFSLAI). C452 serves as a coordination point for heme.

It belongs to the cytochrome P450 family. It depends on heme as a cofactor.

It localises to the membrane. It functions in the pathway secondary metabolite biosynthesis. Its function is as follows. Tryptophan 6-hydroxylase; part of the fragmented gene cluster that mediates the biosynthesis of fusarochromene, a tryptophan-derived metabolite closely related to a group of mycotoxins including fusarochromanone. Within the pathway, fscE hydroxalates the first intermediate D-tryptophan to yield 6-hydroxytryptophan. The first step of the pathway is the epimerization of L-tryptophan to D-tryptophan in the presence of the NRPS-like tryptophan epimerase fscC. D-tryptophan is subsequently hydroxylated by the tryptophan 6-hydroxylase fscE to yield 6-hydroxytryptophan. The pyrrole ring undergoes cleavaged by the tryptophan 2,3-dioxygenase fscD and is finally converted to 4-hydroxykyrunenine by the hydrolase fscH. The NRPS-like oxidoreductase fscA reduces the carboxyl group to primary alcohol and the DMATS-type prenyltransferase fscG performs prenylation, followed by the formation of a chromene ring catalyzed by the oxidoreductase fscI, which leads to desacetylfusarochromene. Epoxidation by fscF and rearrangement reactions of chromene double bonds convert compound desacetylfusarochromene to fusarochromanones. Although specific acetyltransferases were not found near the fsc gene cluster, several predicted enzymes containing the N-acetyltransferase superfamily domain are present in the genome of F.equiseti. These predicted enzymes may have the potential to convert desacetylfusarochromene to fusarochromene. In Fusarium equiseti (Fusarium scirpi), this protein is Tryptophan 6-hydroxylase fscE.